A 219-amino-acid chain; its full sequence is Ribonuclease HII (219 aa).

The RNase H type-2 domain maps to Gly-22–Val-219. The a divalent metal cation site is built by Asp-28, Glu-29, and Asp-125.

It belongs to the RNase HII family. Mn(2+) is required as a cofactor. It depends on Mg(2+) as a cofactor.

It localises to the cytoplasm. It catalyses the reaction Endonucleolytic cleavage to 5'-phosphomonoester.. Functionally, endonuclease that specifically degrades the RNA of RNA-DNA hybrids. This chain is Ribonuclease HII, found in Granulibacter bethesdensis (strain ATCC BAA-1260 / CGDNIH1).